The chain runs to 1311 residues: Clustered mitochondria protein homolog (1311 aa).

Over residues 1–18 (MAEKTNGAAAPNGAADAP) the composition is skewed to low complexity. The segment at 1–27 (MAEKTNGAAAPNGAADAPKSSPEQAQD) is disordered. Residues 324-568 (DITRTQESFL…RITPLDVSWQ (245 aa)) enclose the Clu domain. A TPR 1 repeat occupies 491-525 (IDYGAVDGKDLVATDERFVPQFQKLSKALKVKPHA). Residues 606–630 (SEVAKRGQAKKDQAAVEEKKEAKAE) show a composition bias toward basic and acidic residues. Disordered regions lie at residues 606 to 694 (SEVA…SSDR) and 925 to 966 (PAPV…SSTI). Residues 631 to 661 (SEEDSDSSSEEESSSDESDSEESSSDEDEEE) show a composition bias toward acidic residues. A compositionally biased stretch (basic residues) spans 665 to 675 (PKKKSVPKKAA). Positions 676–694 (KKEEVKEEKKDEKEASSDR) are enriched in basic and acidic residues. 3 TPR repeats span residues 1034–1067 (ARVY…AERT), 1076–1109 (LLDY…WKII), and 1118–1151 (ITTI…CEVV). Residues 1276–1286 (LKFIEGTDKQK) are compositionally biased toward basic and acidic residues. The tract at residues 1276 to 1311 (LKFIEGTDKQKKPAAKKRTGRANPKRRGAEPVSTKA) is disordered. Residues 1287–1301 (KPAAKKRTGRANPKR) are compositionally biased toward basic residues.

This sequence belongs to the CLU family. As to quaternary structure, may associate with the eukaryotic translation initiation factor 3 (eIF-3) complex.

It localises to the cytoplasm. MRNA-binding protein involved in proper cytoplasmic distribution of mitochondria. The sequence is that of Clustered mitochondria protein homolog from Pyricularia oryzae (strain 70-15 / ATCC MYA-4617 / FGSC 8958) (Rice blast fungus).